Reading from the N-terminus, the 345-residue chain is tRNA-specific 2-thiouridylase MnmA (345 aa).

Residues 6-13 (LMSGGVDS) and L32 contribute to the ATP site. C92 (nucleophile) is an active-site residue. The cysteines at positions 92 and 191 are disulfide-linked. G116 contributes to the ATP binding site. The interaction with tRNA stretch occupies residues 138-140 (KDQ). C191 acts as the Cysteine persulfide intermediate in catalysis. Residues 293-294 (RY) are interaction with tRNA.

The protein belongs to the MnmA/TRMU family.

It localises to the cytoplasm. The catalysed reaction is S-sulfanyl-L-cysteinyl-[protein] + uridine(34) in tRNA + AH2 + ATP = 2-thiouridine(34) in tRNA + L-cysteinyl-[protein] + A + AMP + diphosphate + H(+). In terms of biological role, catalyzes the 2-thiolation of uridine at the wobble position (U34) of tRNA, leading to the formation of s(2)U34. The protein is tRNA-specific 2-thiouridylase MnmA of Helicobacter hepaticus (strain ATCC 51449 / 3B1).